A 385-amino-acid polypeptide reads, in one-letter code: Multidrug resistance protein MdtE (385 aa).

Positions 1–20 (MNRRRKLLIPLLFCGAMLTA) are cleaved as a signal peptide. C21 is lipidated: N-palmitoyl cysteine. C21 carries the S-diacylglycerol cysteine lipid modification.

Belongs to the membrane fusion protein (MFP) (TC 8.A.1) family. Homotrimer. Part of the tripartite efflux system MdtEF-TolC, which is composed of an inner membrane transporter, MdtF, a membrane fusion protein, MdtE, and an outer membrane component, TolC. The complex forms a large protein conduit and can translocate molecules across both the inner and outer membranes.

The protein localises to the cell inner membrane. Part of the tripartite efflux system MdtEF-TolC, which confers resistance to compounds such as rhodamine 6G, erythromycin, doxorubicin, ethidium bromide, TPP, SDS, deoxycholate, crystal violet and benzalkonium. The protein is Multidrug resistance protein MdtE (mdtE) of Escherichia coli (strain K12).